Here is a 661-residue protein sequence, read N- to C-terminus: mRNA 3'-end-processing protein RNA14 (661 aa).

The tract at residues 1–37 is disordered; it reads MSGNETPDAGTVKSVSPSSGGSSLPARPTLRERDPND. The span at 14 to 23 shows a compositional bias: low complexity; that stretch reads SVSPSSGGSS. HAT repeat units follow at residues 67–99, 101–135, 149–181, 192–225, 262–298, 307–339, and 513–548; these read QQVAEIREVFGQLHELFPLESFLWTIHLNWELE, EESGQVETLLAKCLSGELMNNDIYLWSTYLGYVRR, TVLKAYELVMEKCAVFEPRSMQFWQDYLQFLEQ, SRVEILRKLYKRLLCLPVESLERYWEKYTQWEQE, SLPTKLNQATQQNLPAPGQYDEYQLQIWTKWIQWELD, VLRQRVEYVHRQAVQHMCFAPEIWYNYAMFVDE, and YNLDQLKEIYKKVINYESKFGNLNNVYELERRFFEK.

It localises to the nucleus. It is found in the cytoplasm. Its function is as follows. Component of the cleavage factor IA (CFIA) complex, which is involved in the endonucleolytic cleavage during polyadenylation-dependent pre-mRNA 3'-end formation. The protein is mRNA 3'-end-processing protein RNA14 (RNA14) of Eremothecium gossypii (strain ATCC 10895 / CBS 109.51 / FGSC 9923 / NRRL Y-1056) (Yeast).